The primary structure comprises 801 residues: Growth-differentiation transition protein 7 (801 aa).

Residues 1-22 form the signal peptide; the sequence is MIKTILIKLILLVIFCYHFLFA.

This sequence belongs to the GDT family.

The protein localises to the secreted. The protein is Growth-differentiation transition protein 7 (gdt7) of Dictyostelium discoideum (Social amoeba).